A 466-amino-acid chain; its full sequence is Pyruvate kinase (466 aa).

Arg-32 provides a ligand contact to substrate. Asn-34, Ser-36, and Asp-66 together coordinate K(+). Residue 34–37 (NTSH) participates in ATP binding. Arg-73 serves as a coordination point for ATP. Residue Glu-219 participates in Mg(2+) binding. Substrate contacts are provided by Gly-242, Asp-243, and Thr-275. Asp-243 is a binding site for Mg(2+).

It belongs to the pyruvate kinase family. In terms of assembly, homotetramer. A divalent metal cation is required as a cofactor.

It carries out the reaction pyruvate + ATP = phosphoenolpyruvate + ADP + H(+). Its pathway is carbohydrate degradation; glycolysis; pyruvate from D-glyceraldehyde 3-phosphate: step 5/5. Allosterically activated by AMP and inhibited by ATP. The protein is Pyruvate kinase (pyk) of Thermotoga maritima (strain ATCC 43589 / DSM 3109 / JCM 10099 / NBRC 100826 / MSB8).